Consider the following 267-residue polypeptide: Integral membrane protein 2C (267 aa).

Threonine 37 is subject to Phosphothreonine. A helical; Signal-anchor for type II membrane protein transmembrane segment spans residues 55–75 (VGGVCYLSMGMVVLLMGLVFA). One can recognise a BRICHOS domain in the interval 136–230 (FGGGDPADII…LCNGKDTYRL (95 aa)). An intrachain disulfide couples cysteine 163 to cysteine 222. N-linked (GlcNAc...) asparagine glycosylation is present at asparagine 169.

It belongs to the ITM2 family. In terms of assembly, interacts with BACE1. Interacts with APP. Interacts with STMN2. In terms of processing, type I membrane-bound, as well as soluble, furin has a pre-eminent role in ITM2C proteolytic processing. PCSK7 and PCSK5 may also be involved although to a lesser extent. The soluble form of PCSK7 is incapable of processing ITM2C. Fails to undergo shedding by ADAM10 and intramembrane cleavage by SPPL2B.

Its subcellular location is the lysosome membrane. It localises to the cell membrane. Its function is as follows. Negative regulator of amyloid-beta peptide production. May inhibit the processing of APP by blocking its access to alpha- and beta-secretase. Binding to the beta-secretase-cleaved APP C-terminal fragment is negligible, suggesting that ITM2C is a poor gamma-secretase cleavage inhibitor. May play a role in TNF-induced cell death and neuronal differentiation. The chain is Integral membrane protein 2C (ITM2C) from Macaca fascicularis (Crab-eating macaque).